The following is a 419-amino-acid chain: Gamma-glutamyl phosphate reductase (419 aa).

This sequence belongs to the gamma-glutamyl phosphate reductase family.

The protein localises to the cytoplasm. The enzyme catalyses L-glutamate 5-semialdehyde + phosphate + NADP(+) = L-glutamyl 5-phosphate + NADPH + H(+). It functions in the pathway amino-acid biosynthesis; L-proline biosynthesis; L-glutamate 5-semialdehyde from L-glutamate: step 2/2. In terms of biological role, catalyzes the NADPH-dependent reduction of L-glutamate 5-phosphate into L-glutamate 5-semialdehyde and phosphate. The product spontaneously undergoes cyclization to form 1-pyrroline-5-carboxylate. This chain is Gamma-glutamyl phosphate reductase, found in Azoarcus sp. (strain BH72).